We begin with the raw amino-acid sequence, 142 residues long: MARVTVEDCVEKVPNRFELVMMAAQRARDIAAGSPLSVDRDNDKNPVVALREIADETVTLETLRNSLIKGHQRVPEQDEPEEEIVELMAGENAWSVPEAGGDEGGDASELLDDEGEGAAAGAEPDFSEMDVPLADLADEDKI.

Positions 93–142 are disordered; the sequence is AWSVPEAGGDEGGDASELLDDEGEGAAAGAEPDFSEMDVPLADLADEDKI. Over residues 100–116 the composition is skewed to acidic residues; that stretch reads GGDEGGDASELLDDEGE.

Belongs to the RNA polymerase subunit omega family. The RNAP catalytic core consists of 2 alpha, 1 beta, 1 beta' and 1 omega subunit. When a sigma factor is associated with the core the holoenzyme is formed, which can initiate transcription.

It carries out the reaction RNA(n) + a ribonucleoside 5'-triphosphate = RNA(n+1) + diphosphate. Functionally, promotes RNA polymerase assembly. Latches the N- and C-terminal regions of the beta' subunit thereby facilitating its interaction with the beta and alpha subunits. The protein is DNA-directed RNA polymerase subunit omega of Rhodospirillum centenum (strain ATCC 51521 / SW).